Here is a 1107-residue protein sequence, read N- to C-terminus: DNA-directed RNA polymerase subunit beta (1107 aa).

Basic and acidic residues predominate over residues 1062-1075; the sequence is DNEGNEKEKARELG. Positions 1062 to 1081 are disordered; that stretch reads DNEGNEKEKARELGLDLPDN.

This sequence belongs to the RNA polymerase beta chain family. As to quaternary structure, the RNAP catalytic core consists of 2 alpha, 1 beta, 1 beta' and 1 omega subunit. When a sigma factor is associated with the core the holoenzyme is formed, which can initiate transcription.

The enzyme catalyses RNA(n) + a ribonucleoside 5'-triphosphate = RNA(n+1) + diphosphate. Its function is as follows. DNA-dependent RNA polymerase catalyzes the transcription of DNA into RNA using the four ribonucleoside triphosphates as substrates. The sequence is that of DNA-directed RNA polymerase subunit beta from Syntrophomonas wolfei subsp. wolfei (strain DSM 2245B / Goettingen).